The chain runs to 144 residues: Large ribosomal subunit protein uL16 (144 aa).

The protein belongs to the universal ribosomal protein uL16 family. In terms of assembly, part of the 50S ribosomal subunit.

In terms of biological role, binds 23S rRNA and is also seen to make contacts with the A and possibly P site tRNAs. This chain is Large ribosomal subunit protein uL16, found in Porphyromonas gingivalis (strain ATCC 33277 / DSM 20709 / CIP 103683 / JCM 12257 / NCTC 11834 / 2561).